Consider the following 109-residue polypeptide: Cytochrome c6 (109 aa).

The signal sequence occupies residues 1–25 (MFKNIIIVVAVTLCALFTNEHVVYS). Heme c contacts are provided by cysteine 39, cysteine 42, histidine 43, and methionine 83.

It belongs to the cytochrome c family. PetJ subfamily. As to quaternary structure, monomer. Binds 1 heme c group covalently per subunit.

It is found in the plastid. Its subcellular location is the chloroplast thylakoid lumen. In terms of biological role, functions as an electron carrier between membrane-bound cytochrome b6-f and photosystem I in oxygenic photosynthesis. The sequence is that of Cytochrome c6 (petJ) from Cyanidium caldarium (Red alga).